Consider the following 165-residue polypeptide: Chorismate pyruvate-lyase (165 aa).

Substrate is bound by residues Met-35, Arg-77, Leu-115, and Glu-156.

It belongs to the UbiC family. Monomer.

Its subcellular location is the cytoplasm. The enzyme catalyses chorismate = 4-hydroxybenzoate + pyruvate. The protein operates within cofactor biosynthesis; ubiquinone biosynthesis. Removes the pyruvyl group from chorismate, with concomitant aromatization of the ring, to provide 4-hydroxybenzoate (4HB) for the ubiquinone pathway. The sequence is that of Chorismate pyruvate-lyase from Escherichia coli (strain K12 / MC4100 / BW2952).